Consider the following 499-residue polypeptide: Phenylalanine--tRNA ligase alpha subunit (499 aa).

L-phenylalanine contacts are provided by residues Thr-342, 381–383 (QID), and Phe-422. Glu-424 is a Mg(2+) binding site. Phe-447 is a binding site for L-phenylalanine.

It belongs to the class-II aminoacyl-tRNA synthetase family. Phe-tRNA synthetase alpha subunit type 2 subfamily. Tetramer of two alpha and two beta subunits. Mg(2+) is required as a cofactor.

It localises to the cytoplasm. The catalysed reaction is tRNA(Phe) + L-phenylalanine + ATP = L-phenylalanyl-tRNA(Phe) + AMP + diphosphate + H(+). The protein is Phenylalanine--tRNA ligase alpha subunit of Thermococcus gammatolerans (strain DSM 15229 / JCM 11827 / EJ3).